A 353-amino-acid polypeptide reads, in one-letter code: Rhodopsin (353 aa).

Residues 1–36 (MNGTEGPYFYVPMVNTSGIVRSPYEYPQYYLVNPAA) lie on the Extracellular side of the membrane. N-linked (GlcNAc...) asparagine glycans are attached at residues N2 and N15. A helical transmembrane segment spans residues 37–61 (YARLGAYMFLLILVGFPINFLTLYV). The Cytoplasmic segment spans residues 62 to 73 (TIEHKKLRTPLN). A helical transmembrane segment spans residues 74–96 (YILLNLAVADLFMVFGGFTTTMY). Residues 97–110 (TSMHGYFVLGRLGC) lie on the Extracellular side of the membrane. C110 and C187 are oxidised to a cystine. The helical transmembrane segment at 111 to 133 (NIEGFFATLGGEIALWSLVVLAI) threads the bilayer. The short motif at 134 to 136 (ERW) is the 'Ionic lock' involved in activated form stabilization element. The Cytoplasmic segment spans residues 134 to 152 (ERWVVVCKPISNFRFGENH). A helical membrane pass occupies residues 153–173 (AIMGLAFTWLMALACAAPPLV). Residues 174–202 (GWSRYIPEGMQCSCGIDYYTRAEGFNNES) are Extracellular-facing. N200 carries N-linked (GlcNAc...) asparagine glycosylation. A helical membrane pass occupies residues 203–224 (FVIYMFVCHFTVPLMVVFFCYG). Over 225–252 (RLLCAVKEAAAAQQESETTQRAEREVTR) the chain is Cytoplasmic. A helical membrane pass occupies residues 253–274 (MVIMMVVAFLVCWLPYASVAWW). The Extracellular portion of the chain corresponds to 275–286 (IFTHQGSEFGPV). A helical membrane pass occupies residues 287–308 (FMTIPAFFAKSSSIYNPMIYIC). K296 carries the N6-(retinylidene)lysine modification. Residues 309 to 353 (LNKQFRHCMITTLCCGKNPFEEEEGASTASKTEASSVSSSSVSPA) are Cytoplasmic-facing. S-palmitoyl cysteine attachment occurs at residues C322 and C323. The segment at 331–353 (EEGASTASKTEASSVSSSSVSPA) is disordered. Residues 334–353 (ASTASKTEASSVSSSSVSPA) are compositionally biased toward low complexity.

Belongs to the G-protein coupled receptor 1 family. Opsin subfamily. Post-translationally, phosphorylated on some or all of the serine and threonine residues present in the C-terminal region. Contains one covalently linked retinal chromophore.

The protein resides in the membrane. It localises to the cell projection. Its subcellular location is the cilium. The protein localises to the photoreceptor outer segment. In terms of biological role, photoreceptor required for image-forming vision at low light intensity. While most salt water fish species use retinal as chromophore, most freshwater fish use 3-dehydroretinal, or a mixture of retinal and 3-dehydroretinal. Light-induced isomerization of 11-cis to all-trans retinal triggers a conformational change that activates signaling via G-proteins. Subsequent receptor phosphorylation mediates displacement of the bound G-protein alpha subunit by arrestin and terminates signaling. The protein is Rhodopsin (rho) of Sarpa salpa (Salema).